The chain runs to 600 residues: Elongation factor 4 (600 aa).

In terms of domain architecture, tr-type G spans 13–194; it reads DRIRNFCIIA…AIVERIPPPR (182 aa). Residues 25–30 and 141–144 each bind GTP; these read DHGKST and NKID.

Belongs to the TRAFAC class translation factor GTPase superfamily. Classic translation factor GTPase family. LepA subfamily.

The protein resides in the cell membrane. The enzyme catalyses GTP + H2O = GDP + phosphate + H(+). Functionally, required for accurate and efficient protein synthesis under certain stress conditions. May act as a fidelity factor of the translation reaction, by catalyzing a one-codon backward translocation of tRNAs on improperly translocated ribosomes. Back-translocation proceeds from a post-translocation (POST) complex to a pre-translocation (PRE) complex, thus giving elongation factor G a second chance to translocate the tRNAs correctly. Binds to ribosomes in a GTP-dependent manner. The chain is Elongation factor 4 from Rubrobacter xylanophilus (strain DSM 9941 / JCM 11954 / NBRC 16129 / PRD-1).